A 253-amino-acid polypeptide reads, in one-letter code: MNRYDRAITIFSPDGHLFQVEYAQEAVKKGSTAVGVRGKDCIVIGVEKKSIPALQDDRTIRKIHMIDDHVMLAFAGLSADARVLVDRARIECQSYKLTLEDPVTVAYISRYIANTKQRFTQSPGRRPFGISMLIGGFDHDGTPRLFKTEPSGAYYEYVANATGRGEKPVREYLEEQYSEENTVDEATTLKLVVKSLAQVVPPGSQNIEIAVMKKVNDELQQRVLSTEEIEALLKVVETERVAAEAEEAASKKK.

It belongs to the peptidase T1A family. As to quaternary structure, the 26S proteasome consists of a 20S proteasome core and two 19S regulatory subunits. The 20S proteasome core is composed of 28 subunits that are arranged in four stacked rings, resulting in a barrel-shaped structure. The two end rings are each formed by seven alpha subunits, and the two central rings are each formed by seven beta subunits. The catalytic chamber with the active sites is on the inside of the barrel.

The protein resides in the cytoplasm. Its subcellular location is the nucleus. Its function is as follows. The proteasome is a multicatalytic proteinase complex which is characterized by its ability to cleave peptides with Arg, Phe, Tyr, Leu, and Glu adjacent to the leaving group at neutral or slightly basic pH. The proteasome has an ATP-dependent proteolytic activity. The polypeptide is Proteasome subunit alpha type-7 (pas-4) (Caenorhabditis elegans).